A 1575-amino-acid polypeptide reads, in one-letter code: MKAQGETEDSERLSKMSSLLERLHAKFNQNRPWSETIKLVRQVMEKRVVMSSGGHQHLVSCLETLQKALKVTSLPAMTDRLESIARQNGLGSHLSASGTECYITSDMFYVEVQLDPAGQLCDVKVAHHGENPVSCPELVQQLREKNFEEFSKHLKGLVNLYNLPGDNKLKTKMYLALQSLEQDLSKMAIMYWKATNAAPLDKILHGSVGYLTPRSGGHLMNMKYYASPSDLLDDKTASPIILHEKNVPRSLGMNASVTIEGTSAMYKLPIAPLIMGSHPADNKWTPSFSAVTSANSVDLPACFFLKFPQPIPVSKAFVQKLQNCTGIPLFETPPTYLPLYELITQFELSKDPDPLPLNHNMRFYAALPGQQHCYFLNKDAPLPDGQSLQGTLVSKITFQHPGRVPLILNMIRHQVAYNTLIGSCVKRTILKEDSPGLLQFEVCPLSESRFSVSFQHPVNDSLVCVVMDVQDSTHVSCKLYKGLSDALICTDDFIAKVVQRCMSIPVTMRAIRRKAETIQADTPALSLIAETVEDMVKKNLPPASSPGYGMTTGNNPMSGTTTPTNTFPGGPITTLFNMSMSIKDRHESVGHGEDFSKVSQNPILTSLLQITGNGGSTIGSSPTPPHHTPPPVSSMAGNTKNHPMLMNLLKDNPAQDFSTLYGSSPLERQNSSSGSPRMEMCSGSNKAKKKKSSRVPPDKPKHQTEDDFQRELFSMDVDSQNPMFDVSMTADALDTPHITPAPSQCSTPPATYPQPVSHPQPSIQRMVRLSSSDSIGPDVTDILSDIAEEASKLPSTSDDCPPIGTPVRDSSSSGHSQSALFDSDVFQTNNNENPYTDPADLIADAAGSPNSDSPTNHFFPDGVDFNPDLLNSQSQSGFGEEYFDESSQSGDNDDFKGFASQALNTLGMPMLGGDNGEPKFKGSSQADTVDFSIISVAGKALGAADLMEHHSGSQSPLLTTGELGKEKTQKRVKEGNGTGASSGSGPGSDSKPGKRSRTPSNDGKSKDKPPKRKKADTEGKSPSHSSSNRPFTPPTSTGGSKSPGSSGRSQTPPGVATPPIPKITIQIPKGTVMVGKPSSHSQYTSSGSVSSSGSKSHHSHSSSSSSLASASTSGKVKSSKSEGSSSSKLSGSMYASQGSSGSSQSKNSSQTGGKPGSSPITKHGLSSGSSSTKMKPQGKPSSLMNPSISKPNISPSHSRPPGGSDKLASPMKPVPGTPPSSKAKSPISSGSSGSHVSGTSSSSGMKSSSGSASSGSVSQKTPPASNSCTPSSSSFSSSGSSMSSSQNQHGSSKGKSPSRNKKPSLTAVIDKLKHGVVTSGPGGEDPIDSQMGASTNSSNHPMSSKHNTSGGEFQSKREKSDKDKSKVSASGGSVDSSKKTSESKNVGSTGVAKIIISKHDGGSPSIKAKVTLQKPGESGGDGLRPQIASSKNYGSPLISGSTPKHERGSPSHSKSPAYTPQNVDSESESGSSIAERSYQNSPSSEDGIRPLPEYSTEKHKKHKKEKKKVRDKDRDKKKSHSMKPENWSKSPISSDPTASVTNNPILSADRPSRLSPDFMIGEEDDDLMDVALIGN.

The segment at 1–670 (MKAQGETEDS…YGSSPLERQN (670 aa)) is interaction with the Mediator complex and THRA. Residues 16–590 (MSSLLERLHA…SIKDRHESVG (575 aa)) are interaction with ESR1. Interaction with the Mediator complex regions lie at residues 108–212 (FYVE…GYLT) and 215–390 (SGGH…SLQG). The tract at residues 405-644 (PLILNMIRHQ…MAGNTKNHPM (240 aa)) is interaction with THRA. The interaction with VDR stretch occupies residues 542–789 (PASSPGYGMT…TDILSDIAEE (248 aa)). Residue Ser588 is modified to Phosphoserine. Positions 604–608 (LTSLL) match the LXXLL motif 1 motif. Disordered stretches follow at residues 609-706 (QITG…QTED), 737-760 (HITP…SHPQ), 791-818 (SKLP…HSQS), 874-895 (SQSG…NDDF), and 951-1564 (SGSQ…GEED). Over residues 622–632 (PTPPHHTPPPV) the composition is skewed to pro residues. The interaction with GATA1 stretch occupies residues 622 to 701 (PTPPHHTPPP…SSRVPPDKPK (80 aa)). The interaction with PPARGC1A and THRA stretch occupies residues 622 to 701 (PTPPHHTPPP…SSRVPPDKPK (80 aa)). The LXXLL motif 2 motif lies at 645–649 (LMNLL). Residues 655 to 675 (QDFSTLYGSSPLERQNSSSGS) are compositionally biased toward polar residues. Residues 656–1066 (DFSTLYGSSP…TPPIPKITIQ (411 aa)) are interaction with ESR1. Phosphoserine is present on Ser664. The span at 696–706 (PPDKPKHQTED) shows a compositional bias: basic and acidic residues. Ser795 bears the Phosphoserine mark. Thr805 bears the Phosphothreonine mark. The segment covering 808–818 (RDSSSSGHSQS) has biased composition (polar residues). The short motif at 875–902 (QSGFGEEYFDESSQSGDNDDFKGFASQA) is the Integrase domain-binding motif (IBM) element. Phosphoserine occurs at positions 887, 953, and 955. The segment covering 963-974 (LGKEKTQKRVKE) has biased composition (basic and acidic residues). A compositionally biased stretch (gly residues) spans 976–986 (NGTGASSGSGP). Thr1032 carries the post-translational modification Phosphothreonine; by MAPK1 or MAPK3. Residues 1034-1051 (PTSTGGSKSPGSSGRSQT) are compositionally biased toward low complexity. A phosphothreonine mark is found at Thr1051 and Thr1057. 2 stretches are compositionally biased toward low complexity: residues 1078 to 1094 (SSHS…SSGS) and 1101 to 1152 (SSSS…SQTG). Ser1158 is subject to Phosphoserine. A compositionally biased stretch (polar residues) spans 1158–1184 (SPITKHGLSSGSSSTKMKPQGKPSSLM). Lys1179 bears the N6-acetyllysine mark. The span at 1185–1197 (NPSISKPNISPSH) shows a compositional bias: low complexity. Ser1209 carries the phosphoserine modification. Position 1217 is a phosphothreonine (Thr1217). Composition is skewed to low complexity over residues 1220–1258 (SSKA…GSVS) and 1265–1295 (SNSC…SKGK). Ser1225 carries the post-translational modification Phosphoserine. Positions 1251-1423 (SASSGSVSQK…KPGESGGDGL (173 aa)) are interaction with TP53. Phosphoserine is present on residues Ser1304 and Ser1349. Over residues 1331–1352 (MGASTNSSNHPMSSKHNTSGGE) the composition is skewed to polar residues. The span at 1354-1366 (QSKREKSDKDKSK) shows a compositional bias: basic and acidic residues. 2 positions are modified to phosphoserine: Ser1405 and Ser1435. Composition is skewed to polar residues over residues 1427–1442 (IASS…SGST) and 1450–1484 (PSHS…SPSS). The residue at position 1442 (Thr1442) is a Phosphothreonine. Thr1459 is modified (phosphothreonine; by MAPK1 or MAPK3). Ser1465, Ser1467, Ser1481, Ser1483, and Ser1484 each carry phosphoserine. The segment covering 1498–1507 (KHKKHKKEKK) has biased composition (basic residues). Lys1523 carries the post-translational modification N6-acetyllysine. Positions 1527–1545 (WSKSPISSDPTASVTNNPI) are enriched in polar residues.

This sequence belongs to the Mediator complex subunit 1 family. Component of the Mediator complex, which is composed of MED1, MED4, MED6, MED7, MED8, MED9, MED10, MED11, MED12, MED13, MED13L, MED14, MED15, MED16, MED17, MED18, MED19, MED20, MED21, MED22, MED23, MED24, MED25, MED26, MED27, MED29, MED30, MED31, CCNC, CDK8 and CDC2L6/CDK11. The MED12, MED13, CCNC and CDK8 subunits form a distinct module termed the CDK8 module. Mediator containing the CDK8 module is less active than Mediator lacking this module in supporting transcriptional activation. Individual preparations of the Mediator complex lacking one or more distinct subunits have been variously termed ARC, CRSP, DRIP, PC2, SMCC and TRAP. This subunit specifically interacts with a number of nuclear receptors in a ligand-dependent fashion including AR, ESR1, ESR2, PPARA, PPARG, RORA, RXRA, RXRG, THRA, THRB and VDR. Interacts with CTNNB1, GABPA, GLI3, PPARGC1A and TP53. Interacts with GATA1 and YWHAH. Interacts with CLOCK; this interaction requires the presence of THRAP3. Interacts with CCAR1. Interacts with NR4A3. Interacts (via IBM motif) with PSIP1 (via IBD domain); phosphorylation increases its affinity for PSIP1. Interacts with USP22. Phosphorylated by MAPK1 or MAPK3 during G2/M phase which may enhance protein stability and promote entry into the nucleolus. Phosphorylation increases its interaction with PSIP1. In terms of tissue distribution, widely expressed in the adult, with high levels of expression in the liver, lung, intestinal mucosa, kidney cortex, thymic cortex, splenic follicle and seminiferous epithelium in testis. Also expressed in the adult heart, brain, spleen and skeletal muscle.

The protein localises to the nucleus. Its function is as follows. Component of the Mediator complex, a coactivator involved in the regulated transcription of nearly all RNA polymerase II-dependent genes. Mediator functions as a bridge to convey information from gene-specific regulatory proteins to the basal RNA polymerase II transcription machinery. Mediator is recruited to promoters by direct interactions with regulatory proteins and serves as a scaffold for the assembly of a functional preinitiation complex with RNA polymerase II and the general transcription factors. Essential for embryogenesis, including development of the central nervous system, heart, liver and placenta and for erythropoiesis. Also required for normal transcriptional control of thyroid-stimulating hormone beta (TSHB) in the pituitary. Acts as a coactivator for GATA1-mediated transcriptional activation during erythroid differentiation of K562 erythroleukemia cells. The sequence is that of Mediator of RNA polymerase II transcription subunit 1 (Med1) from Mus musculus (Mouse).